The following is a 391-amino-acid chain: Stearoyl-[acyl-carrier-protein] 9-desaturase 6, chloroplastic (391 aa).

The transit peptide at 1 to 38 directs the protein to the chloroplast; sequence MLAHKSLLSFTTQWATLMPSPSTFLASRPRGPAKISAV. The Fe cation site is built by Glu-130, Glu-168, His-171, Glu-221, Glu-254, and His-257.

Belongs to the fatty acid desaturase type 2 family. As to quaternary structure, homodimer. It depends on Fe(2+) as a cofactor.

The protein resides in the plastid. It is found in the chloroplast. It catalyses the reaction octadecanoyl-[ACP] + 2 reduced [2Fe-2S]-[ferredoxin] + O2 + 2 H(+) = (9Z)-octadecenoyl-[ACP] + 2 oxidized [2Fe-2S]-[ferredoxin] + 2 H2O. The protein operates within lipid metabolism; fatty acid metabolism. Converts stearoyl-ACP to oleoyl-ACP by introduction of a cis double bond between carbons 9 and 10 of the acyl chain. The chain is Stearoyl-[acyl-carrier-protein] 9-desaturase 6, chloroplastic (S-ACP-DES6) from Arabidopsis thaliana (Mouse-ear cress).